We begin with the raw amino-acid sequence, 664 residues long: RNA-binding protein RMD9, mitochondrial (664 aa).

A mitochondrion-targeting transit peptide spans methionine 1 to phenylalanine 32. Positions leucine 38–asparagine 68 are disordered. Positions serine 55 to asparagine 68 are enriched in basic and acidic residues.

It belongs to the RMD9 family. In terms of assembly, monomer. Phosphorylated. Phosphorylation promotes binding to RNA.

Its subcellular location is the mitochondrion inner membrane. In terms of biological role, binds the 3'-UTR of mitochondrial mRNAs. Involved in the processing or stability of mitochondrial mRNAs. The polypeptide is RNA-binding protein RMD9, mitochondrial (RMD9) (Kluyveromyces lactis (strain ATCC 8585 / CBS 2359 / DSM 70799 / NBRC 1267 / NRRL Y-1140 / WM37) (Yeast)).